The primary structure comprises 433 residues: UDP-N-acetylglucosamine 1-carboxyvinyltransferase (433 aa).

34–35 serves as a coordination point for phosphoenolpyruvate; that stretch reads KN. UDP-N-acetyl-alpha-D-glucosamine is bound at residue Arg104. Catalysis depends on Cys128, which acts as the Proton donor. 2-(S-cysteinyl)pyruvic acid O-phosphothioketal is present on Cys128. Asp320 and Ile342 together coordinate UDP-N-acetyl-alpha-D-glucosamine.

Belongs to the EPSP synthase family. MurA subfamily.

Its subcellular location is the cytoplasm. The enzyme catalyses phosphoenolpyruvate + UDP-N-acetyl-alpha-D-glucosamine = UDP-N-acetyl-3-O-(1-carboxyvinyl)-alpha-D-glucosamine + phosphate. Its pathway is cell wall biogenesis; peptidoglycan biosynthesis. In terms of biological role, cell wall formation. Adds enolpyruvyl to UDP-N-acetylglucosamine. In Parasynechococcus marenigrum (strain WH8102), this protein is UDP-N-acetylglucosamine 1-carboxyvinyltransferase.